The following is a 154-amino-acid chain: Ribosome maturation factor RimP (154 aa).

It belongs to the RimP family.

The protein resides in the cytoplasm. Its function is as follows. Required for maturation of 30S ribosomal subunits. The protein is Ribosome maturation factor RimP of Alkaliphilus oremlandii (strain OhILAs) (Clostridium oremlandii (strain OhILAs)).